Here is a 1172-residue protein sequence, read N- to C-terminus: Lysylphosphatidylglycerol biosynthesis bifunctional protein LysX (1172 aa).

A disordered region spans residues 1 to 34; sequence MGLHLTVPGLRRDGRGVQSNSHDTSSKTTADISR. Residues 1–663 form a phosphatidylglycerol lysyltransferase region; it reads MGLHLTVPGL…LLHHDGSAPD (663 aa). Residues 17–31 are compositionally biased toward polar residues; it reads VQSNSHDTSSKTTAD. Helical transmembrane passes span 80–100, 122–142, 146–166, 177–197, 214–234, 272–292, and 612–632; these read VPAA…LASV, FPDT…ALTA, IAWL…AAEI, FGEN…VLGY, AVWL…VELF, AIFG…LFLS, and VIPR…LPFS. The segment at 664-1172 is lysine--tRNA ligase; it reads VSGLRQVGLT…TLPFPLAKPH (509 aa). The segment at residues 726-804 is a DNA-binding region (OB); the sequence is VSVSGRIMRI…SLIVSGWRLI (79 aa). 2 residues coordinate Mg(2+): Asp1084 and Glu1091.

The protein in the N-terminal section; belongs to the LPG synthetase family. It in the C-terminal section; belongs to the class-II aminoacyl-tRNA synthetase family. Mg(2+) is required as a cofactor.

The protein resides in the cell membrane. The enzyme catalyses tRNA(Lys) + L-lysine + ATP = L-lysyl-tRNA(Lys) + AMP + diphosphate. The catalysed reaction is L-lysyl-tRNA(Lys) + a 1,2-diacyl-sn-glycero-3-phospho-(1'-sn-glycerol) = a 1,2-diacyl-sn-glycero-3-phospho-1'-(3'-O-L-lysyl)-sn-glycerol + tRNA(Lys). In terms of biological role, catalyzes the production of L-lysyl-tRNA(Lys)transfer and the transfer of a lysyl group from L-lysyl-tRNA(Lys) to membrane-bound phosphatidylglycerol (PG), which produces lysylphosphatidylglycerol (LPG), one of the components of the bacterial membrane with a positive net charge. LPG synthesis contributes to the resistance to cationic antimicrobial peptides (CAMPs) and likely protects M.tuberculosis against the CAMPs produced by competiting microorganisms (bacteriocins). In fact, the modification of anionic phosphatidylglycerol with positively charged L-lysine results in repulsion of the peptides. The polypeptide is Lysylphosphatidylglycerol biosynthesis bifunctional protein LysX (lysX) (Mycobacterium tuberculosis (strain F11)).